Here is a 247-residue protein sequence, read N- to C-terminus: uncharacterized protein (247 aa).

The N-acetyltransferase domain maps to 70–205 (ISLWMGPGNN…QKVPLEIMIR (136 aa)).

This sequence belongs to the acetyltransferase family.

The protein resides in the endoplasmic reticulum. It localises to the golgi apparatus. It is found in the vacuole. This is an uncharacterized protein from Schizosaccharomyces pombe (strain 972 / ATCC 24843) (Fission yeast).